Consider the following 205-residue polypeptide: MNKGAFITLEGPEGSGKTTIVKMIEKYLSENNIEYISTREPGGINISEQIRDVILNKDNVAMDARTEALLYVASRRQHLAERVIPAIKEGKVVICDRFIDSSLAYQGYARGIGIDEVMAINEFAIDGYMPDLTLYLDIEPEVGLKRISKNNEREVNRLDLEALDFHKKVREGYFKLLEKYPNRIKKINANQPVDKVFEEVKGFLK.

11–18 (GPEGSGKT) is a binding site for ATP.

The protein belongs to the thymidylate kinase family.

The enzyme catalyses dTMP + ATP = dTDP + ADP. Its function is as follows. Phosphorylation of dTMP to form dTDP in both de novo and salvage pathways of dTTP synthesis. In Clostridium novyi (strain NT), this protein is Thymidylate kinase.